The chain runs to 255 residues: tRNA (guanine-N(1)-)-methyltransferase (255 aa).

S-adenosyl-L-methionine contacts are provided by residues Gly117 and 137-142; that span reads LGDFVL.

It belongs to the RNA methyltransferase TrmD family. As to quaternary structure, homodimer.

It is found in the cytoplasm. It catalyses the reaction guanosine(37) in tRNA + S-adenosyl-L-methionine = N(1)-methylguanosine(37) in tRNA + S-adenosyl-L-homocysteine + H(+). Functionally, specifically methylates guanosine-37 in various tRNAs. The sequence is that of tRNA (guanine-N(1)-)-methyltransferase from Paraburkholderia phytofirmans (strain DSM 17436 / LMG 22146 / PsJN) (Burkholderia phytofirmans).